The sequence spans 373 residues: Tryptophan--tRNA ligase (373 aa).

Positions 79–87 (PSGKFHFGH) match the 'HIGH' region motif. The short motif at 257-261 (KMSSS) is the 'KMSKS' region element.

It belongs to the class-I aminoacyl-tRNA synthetase family.

Its subcellular location is the cytoplasm. It catalyses the reaction tRNA(Trp) + L-tryptophan + ATP = L-tryptophyl-tRNA(Trp) + AMP + diphosphate + H(+). In Hyperthermus butylicus (strain DSM 5456 / JCM 9403 / PLM1-5), this protein is Tryptophan--tRNA ligase.